The chain runs to 215 residues: UPF0502 protein YceH (215 aa).

This sequence belongs to the UPF0502 family.

This is UPF0502 protein YceH from Salmonella arizonae (strain ATCC BAA-731 / CDC346-86 / RSK2980).